A 320-amino-acid polypeptide reads, in one-letter code: Cytochrome f (320 aa).

An N-terminal signal peptide occupies residues 1 to 35 (MQTRKTLSWIKEEITRSISVSLMIYIITGAYISNA). Positions 36, 56, 59, and 60 each coordinate heme. Residues 286-306 (VQGLLFFLASVILAQIFLVLK) form a helical membrane-spanning segment.

This sequence belongs to the cytochrome f family. The 4 large subunits of the cytochrome b6-f complex are cytochrome b6, subunit IV (17 kDa polypeptide, petD), cytochrome f and the Rieske protein, while the 4 small subunits are PetG, PetL, PetM and PetN. The complex functions as a dimer. Heme is required as a cofactor.

The protein resides in the plastid. It is found in the chloroplast thylakoid membrane. In terms of biological role, component of the cytochrome b6-f complex, which mediates electron transfer between photosystem II (PSII) and photosystem I (PSI), cyclic electron flow around PSI, and state transitions. The polypeptide is Cytochrome f (Populus trichocarpa (Western balsam poplar)).